Reading from the N-terminus, the 475-residue chain is Eukaryotic translation initiation factor 3 subunit L (475 aa).

Residues 257–451 (DAIRMFSHIL…DLDYAMQGDL (195 aa)) form the PCI domain.

It belongs to the eIF-3 subunit L family. In terms of assembly, component of the eukaryotic translation initiation factor 3 (eIF-3) complex.

It is found in the cytoplasm. Its function is as follows. Component of the eukaryotic translation initiation factor 3 (eIF-3) complex, which is involved in protein synthesis of a specialized repertoire of mRNAs and, together with other initiation factors, stimulates binding of mRNA and methionyl-tRNAi to the 40S ribosome. The eIF-3 complex specifically targets and initiates translation of a subset of mRNAs involved in cell proliferation. The polypeptide is Eukaryotic translation initiation factor 3 subunit L (Sclerotinia sclerotiorum (strain ATCC 18683 / 1980 / Ss-1) (White mold)).